The chain runs to 335 residues: HTH-type transcriptional regulator RipA (335 aa).

One can recognise an HTH araC/xylS-type domain in the interval 119–216 (RKVAQKLIAY…GDTPSSFTSP (98 aa)). DNA-binding regions (H-T-H motif) lie at residues 136–157 (LEFA…VAST) and 183–206 (IGQV…KRHT).

Under iron limitation, represses the acn (aconitase), catA (catechol 1,2 dioxygenase), leuCD (isopropylmalate dehydratase), narKGHJI (nitrite/nitrate transporter and nitrate reductase), sdhCAB (succinate dehydrogenase), pta (phosphotransacetylase) and katA (catalase) genes. The protein is HTH-type transcriptional regulator RipA of Corynebacterium diphtheriae (strain ATCC 700971 / NCTC 13129 / Biotype gravis).